A 41-amino-acid chain; its full sequence is Large ribosomal subunit protein bL36 (41 aa).

This sequence belongs to the bacterial ribosomal protein bL36 family.

The polypeptide is Large ribosomal subunit protein bL36 (Sinorhizobium fredii (strain NBRC 101917 / NGR234)).